Consider the following 748-residue polypeptide: Catalase-peroxidase 2 (748 aa).

Residues 1–24 (MSSDTSDSRPPNPDTKTASTSESE) are compositionally biased toward polar residues. Positions 1-43 (MSSDTSDSRPPNPDTKTASTSESENPAIPSPKPKSGAPLRNQD) are disordered. Positions 113–238 (WHSAGTYRIH…YGATTMGLIY (126 aa)) form a cross-link, tryptophyl-tyrosyl-methioninium (Trp-Tyr) (with M-264). H114 serves as the catalytic Proton acceptor. A cross-link (tryptophyl-tyrosyl-methioninium (Tyr-Met) (with W-113)) is located at residues 238–264 (YVNPEGPEGQPDPLAAAHDIRETFGRM). H279 is a binding site for heme b.

The protein belongs to the peroxidase family. Peroxidase/catalase subfamily. As to quaternary structure, homotetramer. The cofactor is heme b. Formation of the three residue Trp-Tyr-Met cross-link is important for the catalase, but not the peroxidase activity of the enzyme.

The enzyme catalyses H2O2 + AH2 = A + 2 H2O. The catalysed reaction is 2 H2O2 = O2 + 2 H2O. Bifunctional enzyme with both catalase and broad-spectrum peroxidase activity. May play a role in the intracellular survival of mycobacteria. The chain is Catalase-peroxidase 2 from Mycolicibacterium smegmatis (strain ATCC 700084 / mc(2)155) (Mycobacterium smegmatis).